The chain runs to 375 residues: CC-adding tRNA nucleotidyltransferase (375 aa).

27–30 provides a ligand contact to CTP; it reads GAVR. 2 residues coordinate Mg(2+): Asp40 and Asp42. CTP-binding positions include 95–96, Asn100, 137–146, and Arg177; these read RD and DPLRMLRAPR.

The protein belongs to the tRNA nucleotidyltransferase/poly(A) polymerase family. Mg(2+) serves as cofactor.

It carries out the reaction a tRNA precursor + 2 CTP = a tRNA with a 3' CC end + 2 diphosphate. Functionally, tRNA nucleotidyltransferase involved in the synthesis of the tRNA CCA terminus. Adds the two cytidine residues to tRNA. This chain is CC-adding tRNA nucleotidyltransferase, found in Halalkalibacterium halodurans (strain ATCC BAA-125 / DSM 18197 / FERM 7344 / JCM 9153 / C-125) (Bacillus halodurans).